Reading from the N-terminus, the 264-residue chain is Thymidylate synthase (264 aa).

Residue Arg-21 coordinates dUMP. His-51 contacts (6R)-5,10-methylene-5,6,7,8-tetrahydrofolate. 126 to 127 (RR) contributes to the dUMP binding site. The Nucleophile role is filled by Cys-146. DUMP-binding positions include 166 to 169 (RSAD), Asn-177, and 207 to 209 (HIY). Residue Asp-169 coordinates (6R)-5,10-methylene-5,6,7,8-tetrahydrofolate. Ser-263 is a (6R)-5,10-methylene-5,6,7,8-tetrahydrofolate binding site.

The protein belongs to the thymidylate synthase family. Bacterial-type ThyA subfamily. As to quaternary structure, homodimer.

The protein localises to the cytoplasm. It carries out the reaction dUMP + (6R)-5,10-methylene-5,6,7,8-tetrahydrofolate = 7,8-dihydrofolate + dTMP. It functions in the pathway pyrimidine metabolism; dTTP biosynthesis. Its function is as follows. Catalyzes the reductive methylation of 2'-deoxyuridine-5'-monophosphate (dUMP) to 2'-deoxythymidine-5'-monophosphate (dTMP) while utilizing 5,10-methylenetetrahydrofolate (mTHF) as the methyl donor and reductant in the reaction, yielding dihydrofolate (DHF) as a by-product. This enzymatic reaction provides an intracellular de novo source of dTMP, an essential precursor for DNA biosynthesis. The polypeptide is Thymidylate synthase (Halalkalibacterium halodurans (strain ATCC BAA-125 / DSM 18197 / FERM 7344 / JCM 9153 / C-125) (Bacillus halodurans)).